We begin with the raw amino-acid sequence, 264 residues long: Versicolorin reductase stcU (264 aa).

The NADP(+) site is built by Ile23, Asp69, Asn96, and Arg129. Residues Ser145 and Ser146 each act as proton donor in the active site. Tyr160, Lys164, Ile193, and Thr195 together coordinate NADP(+). The active-site Proton acceptor is the Tyr160. The active-site Lowers pKa of active site Tyr is the Lys164.

The protein belongs to the short-chain dehydrogenases/reductases (SDR) family.

The catalysed reaction is (4S,8R)-2,13,16,20-tetrahydroxy-7,9-dioxapentacyclo[10.8.0.0(3,10).0(4,8).0(14,19)]icosa-1(12),2,5,10,13,16,19-heptaen-18-one + NADPH + H(+) = (4S,8R,16R)-2,13,16,20-tetrahydroxy-7,9-dioxapentacyclo[10.8.0.0(3,10).0(4,8).0(14,19)]icosa-1(12),2,5,10,13,19-hexaen-18-one + NADP(+). It functions in the pathway mycotoxin biosynthesis; sterigmatocystin biosynthesis. In terms of biological role, versicolorin reductase; part of the gene cluster that mediates the biosynthesis of sterigmatocystin (ST), a polyketide-derived furanocoumarin which is part of the most toxic and carcinogenic compounds among the known mycotoxins. The first step in the biosynthesis of sterigmatocystin is the production of hexanoate by the fatty acid synthase (FAS) units stcJ and stcK. The polyketide backbone is assembled by the non-reducing polyketide synthase stcA by condensation of the starter hexanoyl-CoA and 7 malonyl-CoA extender units followed by cyclization and release of norsolorinic acid. Norsolorinic acid is the first stable intermediate in the biosynthesis of sterigmatocystin and is converted into averantin (AVN) by the ketoreductase stcE which reduces the hexanoate ketone to an alcohol. Averantin is then oxidized into 5'-hydroxyaverantin (HAVN) by the cytochrome P450 monooxygenase stcF. 5'-hydroxyaverantin is further converted to 5'-oxyaverantin (OAVN) by the 5'-hydroxyaverantin dehydrogenase stcG. The next step is the conversion of OAVN into averufin (AVF) which is catalyzed by a yet to be identified enzyme. The cytochrome P450 monooxygenase stcB and the flavin-binding monooxygenase stcW are both required for the conversion of averufin to 1-hydroxyversicolorone. The esterase stcI probably catalyzes the formation of versiconal hemiacetal acetate from 1-hydroxyversicolorone. The oxydoreductase stcN then probably catalyzes the biosynthetic step from versiconal to versicolorin B (VERB). The next step is performed by the versicolorin B desaturase stcL to produce versicolorin A (VERA). The ketoreductase stcU and the cytochrome P450 monooxygenase stcS are involved in the conversion of versicolorin A to demethylsterigmatocystin. The Baeyer-Villiger oxidas stcQ and the reductase stcR might be involved in the biosynthetic step from versicolorin A to demethylsterigmatocystin. The final step in the biosynthesis of sterigmatocystin is the methylation of demethylsterigmatocystin catalyzed by the methyltransferase stcP. This chain is Versicolorin reductase stcU, found in Emericella nidulans (strain FGSC A4 / ATCC 38163 / CBS 112.46 / NRRL 194 / M139) (Aspergillus nidulans).